The chain runs to 248 residues: Triosephosphate isomerase (248 aa).

9–11 (NWK) lines the substrate pocket. The active-site Electrophile is His94. Glu164 functions as the Proton acceptor in the catalytic mechanism. Substrate contacts are provided by residues Gly170, Ser209, and 230–231 (GG).

Belongs to the triosephosphate isomerase family. In terms of assembly, homodimer.

The protein resides in the cytoplasm. It carries out the reaction D-glyceraldehyde 3-phosphate = dihydroxyacetone phosphate. It functions in the pathway carbohydrate biosynthesis; gluconeogenesis. It participates in carbohydrate degradation; glycolysis; D-glyceraldehyde 3-phosphate from glycerone phosphate: step 1/1. In terms of biological role, involved in the gluconeogenesis. Catalyzes stereospecifically the conversion of dihydroxyacetone phosphate (DHAP) to D-glyceraldehyde-3-phosphate (G3P). The polypeptide is Triosephosphate isomerase (Hahella chejuensis (strain KCTC 2396)).